Reading from the N-terminus, the 324-residue chain is Elongation factor P--(R)-beta-lysine ligase (324 aa).

75–77 (SPE) is a substrate binding site. ATP is bound by residues 99-101 (RNQ) and Asn108. Tyr117 contributes to the substrate binding site. Residue 243–244 (EL) coordinates ATP. Glu250 is a substrate binding site. ATP is bound at residue Gly299.

Belongs to the class-II aminoacyl-tRNA synthetase family. EpmA subfamily. In terms of assembly, homodimer.

The catalysed reaction is D-beta-lysine + L-lysyl-[protein] + ATP = N(6)-((3R)-3,6-diaminohexanoyl)-L-lysyl-[protein] + AMP + diphosphate + H(+). Its function is as follows. With EpmB is involved in the beta-lysylation step of the post-translational modification of translation elongation factor P (EF-P). Catalyzes the ATP-dependent activation of (R)-beta-lysine produced by EpmB, forming a lysyl-adenylate, from which the beta-lysyl moiety is then transferred to the epsilon-amino group of a conserved specific lysine residue in EF-P. This chain is Elongation factor P--(R)-beta-lysine ligase, found in Buchnera aphidicola subsp. Schizaphis graminum (strain Sg).